Consider the following 430-residue polypeptide: Sulfide-quinone reductase (430 aa).

FAD is bound by residues G9–G13, S34–R36, T42–P43, and T105. The Cysteine persulfide intermediate role is filled by C156. Disulfide bonds link C280–C422 and C419–C430. Positions 294 and 314 each coordinate FAD. An a quinone-binding site is contributed by I346. The active-site Cysteine persulfide intermediate is the C347. Position 382 (K382) interacts with FAD.

This sequence belongs to the SQRD family. Homotrimer. FAD is required as a cofactor.

Its subcellular location is the membrane. It carries out the reaction n a quinone + n hydrogen sulfide + n H(+) = polysulfur(n-2) + n a quinol. In terms of biological role, catalyzes the oxidation of hydrogen sulfide, with the help of a quinone. Consecutive reaction cycles lead to the accumulation of a polysulfide product on the active site Cys residues; these products are released when they exceed a critical length, typically as cyclooctasulfur. This chain is Sulfide-quinone reductase, found in Aquifex aeolicus (strain VF5).